The primary structure comprises 673 residues: DNA ligase (673 aa).

NAD(+)-binding positions include 34–38, 83–84, and E116; these read DAEYD and SL. K118 (N6-AMP-lysine intermediate) is an active-site residue. Positions 139, 176, 293, and 317 each coordinate NAD(+). Residues C411, C414, C429, and C435 each contribute to the Zn(2+) site. A BRCT domain is found at 595-673; it reads NQQNPFFGKT…EDEFLKWVNS (79 aa).

This sequence belongs to the NAD-dependent DNA ligase family. LigA subfamily. It depends on Mg(2+) as a cofactor. Mn(2+) serves as cofactor.

It catalyses the reaction NAD(+) + (deoxyribonucleotide)n-3'-hydroxyl + 5'-phospho-(deoxyribonucleotide)m = (deoxyribonucleotide)n+m + AMP + beta-nicotinamide D-nucleotide.. DNA ligase that catalyzes the formation of phosphodiester linkages between 5'-phosphoryl and 3'-hydroxyl groups in double-stranded DNA using NAD as a coenzyme and as the energy source for the reaction. It is essential for DNA replication and repair of damaged DNA. The sequence is that of DNA ligase from Legionella pneumophila (strain Lens).